Reading from the N-terminus, the 376-residue chain is N-acetyldiaminopimelate deacetylase (376 aa).

Residue aspartate 69 is part of the active site. Glutamate 128 functions as the Proton acceptor in the catalytic mechanism.

It belongs to the peptidase M20A family. N-acetyldiaminopimelate deacetylase subfamily.

The enzyme catalyses N-acetyl-(2S,6S)-2,6-diaminopimelate + H2O = (2S,6S)-2,6-diaminopimelate + acetate. The protein operates within amino-acid biosynthesis; L-lysine biosynthesis via DAP pathway; LL-2,6-diaminopimelate from (S)-tetrahydrodipicolinate (acetylase route): step 3/3. Functionally, catalyzes the conversion of N-acetyl-diaminopimelate to diaminopimelate and acetate. This chain is N-acetyldiaminopimelate deacetylase, found in Bacillus cereus (strain 03BB102).